Reading from the N-terminus, the 358-residue chain is Pyruvate dehydrogenase E1 component subunit alpha (358 aa).

In terms of assembly, heterodimer of an alpha and a beta chain. Thiamine diphosphate serves as cofactor.

The catalysed reaction is N(6)-[(R)-lipoyl]-L-lysyl-[protein] + pyruvate + H(+) = N(6)-[(R)-S(8)-acetyldihydrolipoyl]-L-lysyl-[protein] + CO2. Functionally, the pyruvate dehydrogenase complex catalyzes the overall conversion of pyruvate to acetyl-CoA and CO(2). It contains multiple copies of three enzymatic components: pyruvate dehydrogenase (E1), dihydrolipoamide acetyltransferase (E2) and lipoamide dehydrogenase (E3). The protein is Pyruvate dehydrogenase E1 component subunit alpha (pdhA) of Mycoplasma pneumoniae (strain ATCC 29342 / M129 / Subtype 1) (Mycoplasmoides pneumoniae).